The sequence spans 440 residues: Xylose isomerase (440 aa).

Catalysis depends on residues H101 and D104. Mg(2+)-binding residues include E232, E268, H271, D296, D307, D309, and D339.

It belongs to the xylose isomerase family. As to quaternary structure, homotetramer. Mg(2+) serves as cofactor.

The protein localises to the cytoplasm. It catalyses the reaction alpha-D-xylose = alpha-D-xylulofuranose. This Salmonella paratyphi B (strain ATCC BAA-1250 / SPB7) protein is Xylose isomerase.